Here is a 269-residue protein sequence, read N- to C-terminus: Glutamate racemase (269 aa).

Residues 14–15 (DS) and 46–47 (YS) contribute to the substrate site. Catalysis depends on Cys-78, which acts as the Proton donor/acceptor. 79 to 80 (NT) contacts substrate. Cys-189 (proton donor/acceptor) is an active-site residue. Residue 190–191 (TH) participates in substrate binding.

This sequence belongs to the aspartate/glutamate racemases family.

The enzyme catalyses L-glutamate = D-glutamate. The protein operates within cell wall biogenesis; peptidoglycan biosynthesis. Functionally, provides the (R)-glutamate required for cell wall biosynthesis. The protein is Glutamate racemase of Haemophilus influenzae (strain 86-028NP).